Reading from the N-terminus, the 185-residue chain is Large ribosomal subunit protein uL5 (185 aa).

It belongs to the universal ribosomal protein uL5 family. In terms of assembly, part of the 50S ribosomal subunit; part of the 5S rRNA/L5/L18/L25 subcomplex. Contacts the 5S rRNA and the P site tRNA. Forms a bridge to the 30S subunit in the 70S ribosome.

Its function is as follows. This is one of the proteins that bind and probably mediate the attachment of the 5S RNA into the large ribosomal subunit, where it forms part of the central protuberance. In the 70S ribosome it contacts protein S13 of the 30S subunit (bridge B1b), connecting the 2 subunits; this bridge is implicated in subunit movement. Contacts the P site tRNA; the 5S rRNA and some of its associated proteins might help stabilize positioning of ribosome-bound tRNAs. The polypeptide is Large ribosomal subunit protein uL5 (Rhodopseudomonas palustris (strain HaA2)).